A 968-amino-acid chain; its full sequence is RNA polymerase-associated protein RapA (968 aa).

Residues 164–334 (DVGRRHAPRV…FARLRLLDPS (171 aa)) form the Helicase ATP-binding domain. 177 to 184 (DEVGLGKT) lines the ATP pocket. The DEAH box signature appears at 280–283 (DEAH). The Helicase C-terminal domain occupies 490-644 (RVEWLMGHLT…TCPTGRAIYD (155 aa)).

The protein belongs to the SNF2/RAD54 helicase family. RapA subfamily. Interacts with the RNAP. Has a higher affinity for the core RNAP than for the holoenzyme. Its ATPase activity is stimulated by binding to RNAP.

Transcription regulator that activates transcription by stimulating RNA polymerase (RNAP) recycling in case of stress conditions such as supercoiled DNA or high salt concentrations. Probably acts by releasing the RNAP, when it is trapped or immobilized on tightly supercoiled DNA. Does not activate transcription on linear DNA. Probably not involved in DNA repair. The chain is RNA polymerase-associated protein RapA from Citrobacter koseri (strain ATCC BAA-895 / CDC 4225-83 / SGSC4696).